A 184-amino-acid chain; its full sequence is Photosystem I assembly protein Ycf4 (184 aa).

The next 2 helical transmembrane spans lie at 21–41 (YFWA…GLSS) and 63–83 (IIMT…WLTI).

Belongs to the Ycf4 family.

Its subcellular location is the plastid. The protein localises to the chloroplast thylakoid membrane. Functionally, seems to be required for the assembly of the photosystem I complex. The polypeptide is Photosystem I assembly protein Ycf4 (Gracilaria tenuistipitata var. liui (Red alga)).